Consider the following 594-residue polypeptide: Probable acyl-CoA dehydrogenase (594 aa).

Glu405 acts as the Proton acceptor in catalysis.

Belongs to the acyl-CoA dehydrogenase family. FAD is required as a cofactor.

The catalysed reaction is a 2,3-saturated acyl-CoA + A = a 2,3-dehydroacyl-CoA + AH2. It functions in the pathway lipid metabolism; fatty acid beta-oxidation. Involved in the degradation of long-chain fatty acids. The polypeptide is Probable acyl-CoA dehydrogenase (fadE) (Bacillus subtilis (strain 168)).